A 312-amino-acid polypeptide reads, in one-letter code: UDP-N-acetylenolpyruvoylglucosamine reductase (312 aa).

Positions 24–206 constitute an FAD-binding PCMH-type domain; the sequence is GIGGPADLFA…SADILKVRNE (183 aa). R166 is an active-site residue. S217 serves as the catalytic Proton donor. E307 is an active-site residue.

It belongs to the MurB family. FAD serves as cofactor.

It localises to the cytoplasm. It carries out the reaction UDP-N-acetyl-alpha-D-muramate + NADP(+) = UDP-N-acetyl-3-O-(1-carboxyvinyl)-alpha-D-glucosamine + NADPH + H(+). It functions in the pathway cell wall biogenesis; peptidoglycan biosynthesis. Its function is as follows. Cell wall formation. In Solibacter usitatus (strain Ellin6076), this protein is UDP-N-acetylenolpyruvoylglucosamine reductase.